Consider the following 241-residue polypeptide: Sec-independent protein translocase protein TatC (241 aa).

Transmembrane regions (helical) follow at residues 27–47 (LIIV…FSAG), 76–96 (LTMC…YEAF), 122–142 (FVAG…SIVI), 161–181 (IVTN…IIVL), 193–213 (LVKG…FFSP), and 217–237 (LFSQ…SMVL).

The protein belongs to the TatC family. Forms a complex with TatA.

It is found in the cell membrane. In terms of biological role, part of the twin-arginine translocation (Tat) system that transports large folded proteins containing a characteristic twin-arginine motif in their signal peptide across membranes. The protein is Sec-independent protein translocase protein TatC of Methanocella arvoryzae (strain DSM 22066 / NBRC 105507 / MRE50).